Consider the following 300-residue polypeptide: uncharacterized protein (300 aa).

Polar residues predominate over residues 1–11 (MYNEGVTSPSQ). The disordered stretch occupies residues 1 to 20 (MYNEGVTSPSQLARKKNATD). The recombinase DNA-binding region spans 1–92 (MYNEGVTSPS…QEILITRKRR (92 aa)). Residues 162–249 (SKENYFKELS…DLEFQKIEKE (88 aa)) adopt a coiled-coil conformation.

This is an uncharacterized protein from Bacillus subtilis (strain 168).